The sequence spans 301 residues: GTP cyclohydrolase FolE2 (301 aa).

Belongs to the GTP cyclohydrolase IV family.

It catalyses the reaction GTP + H2O = 7,8-dihydroneopterin 3'-triphosphate + formate + H(+). It functions in the pathway cofactor biosynthesis; 7,8-dihydroneopterin triphosphate biosynthesis; 7,8-dihydroneopterin triphosphate from GTP: step 1/1. Functionally, converts GTP to 7,8-dihydroneopterin triphosphate. The sequence is that of GTP cyclohydrolase FolE2 from Exiguobacterium sibiricum (strain DSM 17290 / CCUG 55495 / CIP 109462 / JCM 13490 / 255-15).